Here is a 180-residue protein sequence, read N- to C-terminus: Large ribosomal subunit protein uL18m (180 aa).

Belongs to the universal ribosomal protein uL18 family. Component of the mitochondrial large ribosomal subunit (mt-LSU). Mature mammalian 55S mitochondrial ribosomes consist of a small (28S) and a large (39S) subunit. The 28S small subunit contains a 12S ribosomal RNA (12S mt-rRNA) and 30 different proteins. The 39S large subunit contains a 16S rRNA (16S mt-rRNA), a copy of mitochondrial valine transfer RNA (mt-tRNA(Val)), which plays an integral structural role, and 52 different proteins.

The protein localises to the mitochondrion. Its function is as follows. Together with thiosulfate sulfurtransferase (TST), acts as a mitochondrial import factor for the cytosolic 5S rRNA. The precursor form shows RNA chaperone activity; is able to fold the 5S rRNA into an import-competent conformation that is recognized by rhodanese (TST). Both the cytoplasmic and mitochondrial forms are able to bind to the helix IV-loop D in the gamma domain of the 5S rRNA. The polypeptide is Large ribosomal subunit protein uL18m (MRPL18) (Homo sapiens (Human)).